The primary structure comprises 105 residues: MAGGGVWVFRNNGVMELEEQATSRKALVHVATSEVIRSTEALERRLGALGWERYYEDRATLQLHRRDGSADLISIPRDFSRFRSTHMYDVVVKNRDHFKVVDLHT.

Belongs to the FPF1 family.

In Oryza sativa subsp. japonica (Rice), this protein is Flowering-promoting factor 1-like protein 5.